We begin with the raw amino-acid sequence, 263 residues long: MEDETELCFRSNKVTRLEMFVCTYGGKISSLACSHMELIKLLQIAEPVKALNCNFGHQCLPGYESLIKTPKKSKNMLRRPRKTEGDGTCFNSAIEASILFKDKMYKLKCFPSTGEIQVPGVIFPDFEDGKNIIQQWVEFLQHQPIEKKVQIIEFKTIMINFKFQINSVSPRVIIHLKKFAALLEQIPTPYPIREIKPPLEDSKVSAKFMVSPGKKVRINVFLKGKINILGCNTKESAETIYAFLKDLISVHWQEILCVLPVPD.

This sequence belongs to the asfivirus B263R family.

Functionally, putative TATA-binding protein. The protein is Putative TATA-binding protein pB263R of African swine fever virus (isolate Pig/Kenya/KEN-50/1950) (ASFV).